Consider the following 502-residue polypeptide: T-complex protein 11-like X-linked protein 2 (502 aa).

A disordered region spans residues 1–36 (MPKTEETVLQNDPSVAENGAPEPKTPGQSQKSKSFC).

It belongs to the TCP11 family.

This chain is T-complex protein 11-like X-linked protein 2, found in Homo sapiens (Human).